The sequence spans 944 residues: Translation initiation factor IF-2 (944 aa).

The segment covering 55–81 (LTGQAAAPAAAPSSAPRPGARSSAPKP) has biased composition (low complexity). Positions 55 to 329 (LTGQAAAPAA…RTKRAEFELR (275 aa)) are disordered. Over residues 82 to 92 (GGRPTPGPQPT) the composition is skewed to pro residues. The span at 93 to 107 (AAPEVEAPEASDVPV) shows a compositional bias: low complexity. Residues 123–135 (ASRKAAAEEKAQA) show a composition bias toward basic and acidic residues. Composition is skewed to low complexity over residues 136–153 (EKSAASATPDAPAAETPS) and 211–222 (GQRPAAGAAGPR). Residues 223-236 (PAAPRPGSPRPGAP) are compositionally biased toward pro residues. Low complexity predominate over residues 244-257 (GARPAGFGQRPAGA). Residues 258–269 (GRPGGAPGGAGR) show a composition bias toward gly residues. Residues 270-283 (PGAPAAGGFQRPAG) are compositionally biased toward low complexity. Residues 284-310 (GFAGRPGGGGRGRGPGGGTAGAFGRGG) are compositionally biased toward gly residues. Over residues 311–322 (GKSKSRKSKRTK) the composition is skewed to basic residues. Residues 437-611 (IRPPVVTVMG…LTADAGLDLR (175 aa)) enclose the tr-type G domain. The G1 stretch occupies residues 446-453 (GHVDHGKT). GTP is bound at residue 446–453 (GHVDHGKT). The segment at 471-475 (GITQH) is G2. Residues 496–499 (DTPG) form a G3 region. GTP-binding positions include 496-500 (DTPGH) and 550-553 (NKVD). Residues 550–553 (NKVD) form a G4 region. The tract at residues 586-588 (SAL) is G5.

This sequence belongs to the TRAFAC class translation factor GTPase superfamily. Classic translation factor GTPase family. IF-2 subfamily.

Its subcellular location is the cytoplasm. Its function is as follows. One of the essential components for the initiation of protein synthesis. Protects formylmethionyl-tRNA from spontaneous hydrolysis and promotes its binding to the 30S ribosomal subunits. Also involved in the hydrolysis of GTP during the formation of the 70S ribosomal complex. The polypeptide is Translation initiation factor IF-2 (Clavibacter michiganensis subsp. michiganensis (strain NCPPB 382)).